The primary structure comprises 250 residues: Pyrroloquinoline-quinone synthase (250 aa).

It belongs to the PqqC family.

The catalysed reaction is 6-(2-amino-2-carboxyethyl)-7,8-dioxo-1,2,3,4,7,8-hexahydroquinoline-2,4-dicarboxylate + 3 O2 = pyrroloquinoline quinone + 2 H2O2 + 2 H2O + H(+). The protein operates within cofactor biosynthesis; pyrroloquinoline quinone biosynthesis. Its function is as follows. Ring cyclization and eight-electron oxidation of 3a-(2-amino-2-carboxyethyl)-4,5-dioxo-4,5,6,7,8,9-hexahydroquinoline-7,9-dicarboxylic-acid to PQQ. The polypeptide is Pyrroloquinoline-quinone synthase (Xanthomonas axonopodis pv. citri (strain 306)).